We begin with the raw amino-acid sequence, 97 residues long: Putative septation protein SpoVG (97 aa).

Belongs to the SpoVG family.

In terms of biological role, could be involved in septation. The protein is Putative septation protein SpoVG of Borreliella burgdorferi (strain ATCC 35210 / DSM 4680 / CIP 102532 / B31) (Borrelia burgdorferi).